A 510-amino-acid polypeptide reads, in one-letter code: Histidine ammonia-lyase (510 aa).

Residues Ala143–Gly145 constitute a cross-link (5-imidazolinone (Ala-Gly)). At Ser144 the chain carries 2,3-didehydroalanine (Ser).

It belongs to the PAL/histidase family. Contains an active site 4-methylidene-imidazol-5-one (MIO), which is formed autocatalytically by cyclization and dehydration of residues Ala-Ser-Gly.

The protein resides in the cytoplasm. It carries out the reaction L-histidine = trans-urocanate + NH4(+). It functions in the pathway amino-acid degradation; L-histidine degradation into L-glutamate; N-formimidoyl-L-glutamate from L-histidine: step 1/3. This Shewanella piezotolerans (strain WP3 / JCM 13877) protein is Histidine ammonia-lyase.